The primary structure comprises 282 residues: Ribosomal RNA small subunit methyltransferase A (282 aa).

Residues N28, L30, G55, E77, D103, and N122 each coordinate S-adenosyl-L-methionine.

It belongs to the class I-like SAM-binding methyltransferase superfamily. rRNA adenine N(6)-methyltransferase family. RsmA subfamily.

The protein localises to the cytoplasm. It catalyses the reaction adenosine(1518)/adenosine(1519) in 16S rRNA + 4 S-adenosyl-L-methionine = N(6)-dimethyladenosine(1518)/N(6)-dimethyladenosine(1519) in 16S rRNA + 4 S-adenosyl-L-homocysteine + 4 H(+). Its function is as follows. Specifically dimethylates two adjacent adenosines (A1518 and A1519) in the loop of a conserved hairpin near the 3'-end of 16S rRNA in the 30S particle. May play a critical role in biogenesis of 30S subunits. The sequence is that of Ribosomal RNA small subunit methyltransferase A from Paracoccus denitrificans (strain Pd 1222).